A 279-amino-acid chain; its full sequence is Large ribosomal subunit protein uL2 (279 aa).

A disordered region spans residues valine 223 to arginine 279. Basic residues predominate over residues valine 270–arginine 279.

The protein belongs to the universal ribosomal protein uL2 family. In terms of assembly, part of the 50S ribosomal subunit. Forms a bridge to the 30S subunit in the 70S ribosome.

Its function is as follows. One of the primary rRNA binding proteins. Required for association of the 30S and 50S subunits to form the 70S ribosome, for tRNA binding and peptide bond formation. It has been suggested to have peptidyltransferase activity; this is somewhat controversial. Makes several contacts with the 16S rRNA in the 70S ribosome. This is Large ribosomal subunit protein uL2 from Leptospira borgpetersenii serovar Hardjo-bovis (strain JB197).